The sequence spans 875 residues: Protein translocase subunit SecA (875 aa).

ATP contacts are provided by residues Q87, 105-109 (GEGKT), and D512. C860, C862, C871, and H872 together coordinate Zn(2+).

This sequence belongs to the SecA family. In terms of assembly, monomer and homodimer. Part of the essential Sec protein translocation apparatus which comprises SecA, SecYEG and auxiliary proteins SecDF-YajC and YidC. Zn(2+) serves as cofactor.

Its subcellular location is the cell inner membrane. It is found in the cytoplasm. It carries out the reaction ATP + H2O + cellular proteinSide 1 = ADP + phosphate + cellular proteinSide 2.. Part of the Sec protein translocase complex. Interacts with the SecYEG preprotein conducting channel. Has a central role in coupling the hydrolysis of ATP to the transfer of proteins into and across the cell membrane, serving both as a receptor for the preprotein-SecB complex and as an ATP-driven molecular motor driving the stepwise translocation of polypeptide chains across the membrane. The chain is Protein translocase subunit SecA from Buchnera aphidicola subsp. Acyrthosiphon pisum (strain 5A).